Here is a 289-residue protein sequence, read N- to C-terminus: MSTFKPLKTLTSRRQVLKAGLAALTLSGMSQAIAKDELLKTSNGHSKPKAKKSGGKRVVVLDPGHGGIDTGAIGRNGSKEKHVVLAIAKNVRSILRNHGIDARLTRSGDTFIPLYDRVEIAHKHGADLFMSIHADGFTNPKAAGASVFALSNRGASSAMAKYLSERENRADEVAGKKATDKDHLLQQVLFDLVQTDTIKNSLTLGSHILKKIKPVHKLHSRNTEQAAFVVLKSPSVPSVLVETSFITNPEEERLLGTAAFRQKIATAIAEGVISYFHWFDNQKAHSKKR.

The tat-type signal signal peptide spans 1 to 34; that stretch reads MSTFKPLKTLTSRRQVLKAGLAALTLSGMSQAIA. The disordered stretch occupies residues 39-63; sequence LKTSNGHSKPKAKKSGGKRVVVLDP. The segment covering 46-55 has biased composition (basic residues); that stretch reads SKPKAKKSGG. Residues 59–273 enclose the MurNAc-LAA domain; the sequence is VVLDPGHGGI…IATAIAEGVI (215 aa).

The protein belongs to the N-acetylmuramoyl-L-alanine amidase 3 family. Post-translationally, exported by the Tat system. The position of the signal peptide cleavage has not been experimentally proven. Can also be exported by the Sec system.

The protein localises to the periplasm. It carries out the reaction Hydrolyzes the link between N-acetylmuramoyl residues and L-amino acid residues in certain cell-wall glycopeptides.. In terms of biological role, cell-wall hydrolase involved in septum cleavage during cell division. Can also act as powerful autolysin in the presence of murein synthesis inhibitors. The polypeptide is N-acetylmuramoyl-L-alanine amidase AmiA (amiA) (Escherichia coli (strain K12)).